A 245-amino-acid chain; its full sequence is Interleukin-1 receptor-associated kinase 1-binding protein 1 homolog (245 aa).

Belongs to the IRAK1BP1 family.

The protein localises to the cytoplasm. Its subcellular location is the nucleus. In terms of biological role, may be part of a signaling pathway that leads to NF-kappa-B activation. The polypeptide is Interleukin-1 receptor-associated kinase 1-binding protein 1 homolog (irak1bp1) (Xenopus laevis (African clawed frog)).